The following is a 307-amino-acid chain: Stage III sporulation protein AA (307 aa).

143-150 (GPPQTGKT) is a binding site for ATP.

The sequence is that of Stage III sporulation protein AA (spoIIIAA) from Bacillus subtilis (strain 168).